The primary structure comprises 385 residues: Multidrug export protein AcrE (385 aa).

Residues 1–23 (MTKHARFFLLPSFILISAALIAG) form the signal peptide. Cys-24 is lipidated: N-palmitoyl cysteine. Cys-24 is lipidated: S-diacylglycerol cysteine. The segment at 366-385 (ARPGEQVKATTDTPADTASK) is disordered. Polar residues predominate over residues 373 to 385 (KATTDTPADTASK).

Belongs to the membrane fusion protein (MFP) (TC 8.A.1) family. In terms of assembly, part of the tripartite efflux system AcrEF-TolC, which is composed of an inner membrane transporter, AcrF, a periplasmic membrane fusion protein, AcrE, and an outer membrane component, TolC. The complex forms a large protein conduit and can translocate molecules across both the inner and outer membranes.

The protein resides in the cell inner membrane. In terms of biological role, part of the tripartite efflux system AcrEF-TolC. Involved in the efflux of indole and organic solvents. The chain is Multidrug export protein AcrE (acrE) from Escherichia coli (strain K12).